The following is a 188-amino-acid chain: Anaphase-promoting complex subunit 10 (188 aa).

The DOC domain maps to 4–187; sequence NSNINSNSRL…SPEVSMFQTL (184 aa).

It belongs to the APC10 family. As to quaternary structure, the APC/C is composed of at least 13 subunits that stay tightly associated throughout the cell cycle: anapc1, anapc2, anapc3, anapc4, anapc5, anapc6, anapc7, anapc8, anapc10, anapc11, cdc20, cdc26 and cdh1.

The protein localises to the nucleus. The protein operates within protein modification; protein ubiquitination. In terms of biological role, component of the anaphase promoting complex/cyclosome (APC/C), a cell cycle-regulated E3 ubiquitin-protein ligase complex that controls progression through mitosis and the G1 phase of the cell cycle. The polypeptide is Anaphase-promoting complex subunit 10 (anapc10) (Dictyostelium discoideum (Social amoeba)).